The chain runs to 373 residues: Packaging protein 3 (373 aa).

The tract at residues methionine 1–proline 32 is disordered. The segment at methionine 1–serine 150 is interaction with packaging protein 1. Phosphoserine; by host is present on residues serine 52 and serine 334.

Belongs to the adenoviridae packaging protein 3 family. As to quaternary structure, part of the genome packaging complex composed of packaging proteins 1, 2 and 3; this complex specifically binds to the packaging sequence on the left end of viral genomic DNA and performs packaging of the viral genome. Interacts with hexon-linking protein IIIa; this interaction is required to promote correct genome packaging. Cleaved at different sites by the viral protease during virion maturation.

It is found in the host nucleus. Its function is as follows. Involved in viral genome packaging through its interaction with packaging proteins 1 and 2. After proteolytic cleavage by adenovirus protease, L1 52/55k protein is removed from the capsid during viral maturation. This chain is Packaging protein 3, found in Homo sapiens (Human).